The following is a 336-amino-acid chain: Cytosolic 5'-nucleotidase 3A (336 aa).

Residue aspartate 88 is the Nucleophile of the active site. Residues aspartate 88 and aspartate 90 each contribute to the Mg(2+) site. Residue aspartate 90 is the Proton donor of the active site. Residue glutamate 135 coordinates CMP. Residues glutamate 135 and serine 156 each contribute to the N(7)-methyl-GMP site. Substrate-binding positions include 203 to 204 (SA) and lysine 252. Aspartate 277 provides a ligand contact to Mg(2+). Serine 278 is modified (phosphoserine).

It belongs to the pyrimidine 5'-nucleotidase family. Monomer. Isoforms 1, 3 and 4 are expressed in reticulocytes. Isoform 4 is hardly detectable in bone marrow and fetal liver.

The protein resides in the cytoplasm. It localises to the endoplasmic reticulum. The catalysed reaction is N(7)-methyl-GMP + H2O = N(7)-methylguanosine + phosphate. It catalyses the reaction CMP + H2O = cytidine + phosphate. The enzyme catalyses a ribonucleoside 5'-phosphate + H2O = a ribonucleoside + phosphate. Functionally, nucleotidase which shows specific activity towards cytidine monophosphate (CMP) and 7-methylguanosine monophosphate (m(7)GMP). CMP seems to be the preferred substrate. The chain is Cytosolic 5'-nucleotidase 3A (NT5C3A) from Homo sapiens (Human).